Reading from the N-terminus, the 337-residue chain is Trace amine-associated receptor 5 (337 aa).

The Extracellular segment spans residues 1 to 38 (MRAVLLPGSGEQPAAFCYQVNGSCPRTVHPLAIRVLIY). N-linked (GlcNAc...) asparagine glycosylation is present at asparagine 21. 2 disulfide bridges follow: cysteine 24/cysteine 188 and cysteine 99/cysteine 192. A helical transmembrane segment spans residues 39–59 (LACAVGMLITVLGNLFVVFAV). At 60 to 70 (SYFKVLHTPTN) the chain is on the cytoplasmic side. A helical membrane pass occupies residues 71–91 (FLLLSLALADMLLGLLVLPLS). The Extracellular portion of the chain corresponds to 92 to 109 (TVRSVESCWFFGDFLCRL). The chain crosses the membrane as a helical span at residues 110-130 (HTYLDTLFCLTSIFHLCFISI). The Cytoplasmic segment spans residues 131-154 (DRHCAICDPLLYPSKFTVRIALRY). The chain crosses the membrane as a helical span at residues 155–175 (IAAGWGIPAAYTAFFLYTDVV). The tract at residues 176–189 (ERALSQWLEEMPCV) is extracellular Loop 2 (ECL2). Topologically, residues 176–204 (ERALSQWLEEMPCVGSCQLLFNKFWGWLN) are extracellular. Residues 205–225 (FPAFFIPCLIMISLYLKIFVV) form a helical membrane-spanning segment. The Cytoplasmic segment spans residues 226-253 (ATRQAQQIRTLSQSLSGAVKRERKAAKT). The chain crosses the membrane as a helical span at residues 254 to 274 (LGIAVGIYLVCWLPFTVDTLV). The Extracellular segment spans residues 275-284 (DSLLNFVTPP). The chain crosses the membrane as a helical span at residues 285–307 (LVFDIFIWFAYFNSACNPIIYVF). Topologically, residues 308–337 (SYRWFRKALKLLLSREILSPRTQTADLFHD) are cytoplasmic.

Belongs to the G-protein coupled receptor 1 family.

It is found in the cell membrane. In terms of biological role, olfactory receptor specific for trimethylamine, a trace amine enriched in the urine of male rats, playing a role in social behavior. Also activated by N-methylpiperidine. Trimethylamine is present at high concentration in the urine of male after puberty and acts as an attractant. Trimethylamine-binding causes a conformation change that triggers signaling via G(s)-class of G alpha proteins (GNAL or GNAS). Also required to provide olfactory input into limbic brain areas to regulate emotional behaviors likely via modulation of the serotonin system. The polypeptide is Trace amine-associated receptor 5 (Rattus norvegicus (Rat)).